The sequence spans 155 residues: Protein-export protein SecB (155 aa).

Belongs to the SecB family. As to quaternary structure, homotetramer, a dimer of dimers. One homotetramer interacts with 1 SecA dimer.

The protein resides in the cytoplasm. Its function is as follows. One of the proteins required for the normal export of preproteins out of the cell cytoplasm. It is a molecular chaperone that binds to a subset of precursor proteins, maintaining them in a translocation-competent state. It also specifically binds to its receptor SecA. This chain is Protein-export protein SecB, found in Vibrio atlanticus (strain LGP32) (Vibrio splendidus (strain Mel32)).